The chain runs to 596 residues: Elongation factor 4 (596 aa).

The 183-residue stretch at 2-184 folds into the tr-type G domain; that stretch reads KQIRNFSIIA…VIVAKIPPPE (183 aa). GTP is bound by residues 14–19 and 131–134; these read DHGKST and NKID.

Belongs to the TRAFAC class translation factor GTPase superfamily. Classic translation factor GTPase family. LepA subfamily.

It is found in the cell inner membrane. The enzyme catalyses GTP + H2O = GDP + phosphate + H(+). Its function is as follows. Required for accurate and efficient protein synthesis under certain stress conditions. May act as a fidelity factor of the translation reaction, by catalyzing a one-codon backward translocation of tRNAs on improperly translocated ribosomes. Back-translocation proceeds from a post-translocation (POST) complex to a pre-translocation (PRE) complex, thus giving elongation factor G a second chance to translocate the tRNAs correctly. Binds to ribosomes in a GTP-dependent manner. The sequence is that of Elongation factor 4 from Shewanella baltica (strain OS155 / ATCC BAA-1091).